We begin with the raw amino-acid sequence, 210 residues long: MEAEGSSRKVTRLLRLGVKEDSEEQHDVKAEAFFQAGEGRDEQGAQGQPGVGAVGTEGEGEELNGGKGHFGPGAPGPMGDGDKDSGTRAGGVEQEQNEPVAEGTESQENGNPGGRQMPLQGSRFAQHRLRELESILQRTNSFDVPREDLDRLMDACVSRVQNWFKIRRAAARRTRRRATPVPEHFRGTFECPACRGVRWGERCPFATPRF.

A disordered region spans residues 1–119 (MEAEGSSRKV…GNPGGRQMPL (119 aa)). Over residues 17–30 (GVKEDSEEQHDVKA) the composition is skewed to basic and acidic residues. The span at 47–79 (GQPGVGAVGTEGEGEELNGGKGHFGPGAPGPMG) shows a compositional bias: gly residues. The segment at residues 117 to 175 (MPLQGSRFAQHRLRELESILQRTNSFDVPREDLDRLMDACVSRVQNWFKIRRAAARRTR) is a DNA-binding region (homeobox; atypical).

The protein localises to the nucleus. Its function is as follows. Transcription factor required for differentiation of embryonic stem cells (ESCs) into primordial germ cells. This is Homeobox protein Rhox5 (Rhox5) from Mus musculus (Mouse).